Consider the following 192-residue polypeptide: CASP-like protein 2U1 (192 aa).

The Cytoplasmic portion of the chain corresponds to Met-1–Gly-11. Residues Leu-12–Leu-32 traverse the membrane as a helical segment. Residues Leu-33–Ser-58 lie on the Extracellular side of the membrane. The chain crosses the membrane as a helical span at residues Gly-59 to Val-79. Residues Ser-80–Arg-96 are Cytoplasmic-facing. The helical transmembrane segment at Trp-97–Ala-117 threads the bilayer. The Extracellular portion of the chain corresponds to Thr-118–His-145. The helical transmembrane segment at Met-146–Val-166 threads the bilayer. Residues Ser-167–Thr-192 are Cytoplasmic-facing.

This sequence belongs to the Casparian strip membrane proteins (CASP) family. In terms of assembly, homodimer and heterodimers.

It is found in the cell membrane. The polypeptide is CASP-like protein 2U1 (Adiantum capillus-veneris (Maidenhair fern)).